We begin with the raw amino-acid sequence, 146 residues long: Hemoglobin subunit beta (146 aa).

An N-acetylvaline modification is found at Val-1. In terms of domain architecture, Globin spans 2–146 (HLTGEEKAAV…VANALAHKYH (145 aa)). Position 12 is a phosphothreonine (Thr-12). Ser-44 carries the phosphoserine modification. N6-acetyllysine is present on Lys-59. Position 63 (His-63) interacts with heme b. Lys-82 is modified (N6-acetyllysine). His-92 lines the heme b pocket. Position 93 is an S-nitrosocysteine (Cys-93). Lys-144 carries the post-translational modification N6-acetyllysine.

This sequence belongs to the globin family. Heterotetramer of two alpha chains and two beta chains. As to expression, red blood cells.

Functionally, involved in oxygen transport from the lung to the various peripheral tissues. The chain is Hemoglobin subunit beta (HBB) from Ailurus fulgens (Himalayan red panda).